The following is a 441-amino-acid chain: Mannose-6-phosphate isomerase 2 (441 aa).

Zn(2+) is bound by residues Gln-131, His-133, Glu-158, and His-296. Arg-315 is an active-site residue.

It belongs to the mannose-6-phosphate isomerase type 1 family. It depends on Zn(2+) as a cofactor. Not expressed in any organs under light (at protein level).

It catalyses the reaction D-mannose 6-phosphate = D-fructose 6-phosphate. The protein operates within nucleotide-sugar biosynthesis; GDP-alpha-D-mannose biosynthesis; alpha-D-mannose 1-phosphate from D-fructose 6-phosphate: step 1/2. With respect to regulation, inhibited by EDTA, Zn(2+), Cd(2+), DTT, p-chloromercuribenzoate and L-ascorbic acid (AsA). In terms of biological role, involved in the synthesis of the GDP-mannose and dolichol-phosphate-mannose required for a number of critical mannosyl transfer reactions. The sequence is that of Mannose-6-phosphate isomerase 2 (PMI2) from Arabidopsis thaliana (Mouse-ear cress).